The sequence spans 95 residues: Ribonuclease kappa-B (95 aa).

2 helical membrane-spanning segments follow: residues 12-32 and 68-88; these read GLII…FFYI and CWIA…QFYV.

This sequence belongs to the RNase K family.

Its subcellular location is the membrane. Inhibited by Zn(2+) and Hg(2+), while it is unaffected by Ca(2+). Its function is as follows. Endoribonuclease which displays activity against poly(C) and poly(U) synthetic substrates, as well as rRNA. This Ceratitis capitata (Mediterranean fruit fly) protein is Ribonuclease kappa-B.